Reading from the N-terminus, the 614-residue chain is MRPLRPWALLLGALLGAAAAAARRYPHVAVLDGAAAYRLLWGRRGSALAFRLEVRTRGYVGFGLSAGGGMASADIVVGGVEGGRPYLQDYHTDENRVLKKDPQQDYHLEYAMENSTHTILAFSRELYTCDPNDKSITESTVRVIWAYHHKDLGEAGQNYHGSTRGTKSLRLLNPEKAEVSPASLSYFDLTNKDVPVPDKDTTYWCQMFKIPVQHEKHHVTKVEPLIQKDHENLVHHILLYQCSSNLNDSVLDYGHECYHPNMPDSFFTCETVIFAWAIGGEGFTYPPHVGLSIGTAADPQFVLMEVHYDNPTYTEGLIDNSGLRLFYTPVLRKYDAGVIEAGLWVSLFHNIPPGMPEFVSEGHCTLECLEEALGAERPSGIHVFAVLLHAHLAGRAIRMRHFRNGEEQKLLAYDEEFDFNFQEFQYLEEERTIMPGDNLITECHYSTTDRIRMTWGGLSTRNEMCLSYLLYYPRINLTRCASIPDIMEQLQFIGVKEIYRPVRTWPFIIKSPKQYKNLSFMDAMNKFKWSKSEGLSYNELVLKLPMNVRCSKTDNAEWSFQGMTAFPPEVERPYKTEPVICSSSSCLPCSLSLTLLFVVYVASSTIGNFGPVVQ.

A signal peptide spans 1–22; the sequence is MRPLRPWALLLGALLGAAAAAA. Over 23–592 the chain is Lumenal; it reads RRYPHVAVLD…SSSCLPCSLS (570 aa). One can recognise a DOMON domain in the interval 35–148; that stretch reads AAYRLLWGRR…STVRVIWAYH (114 aa). Asn-114 is a glycosylation site (N-linked (GlcNAc...) asparagine). Tyr-203 is a catalytic residue. Intrachain disulfides connect Cys-205/Cys-257 and Cys-242/Cys-269. Residues His-235 and His-236 each contribute to the Cu cation site. A glycan (N-linked (GlcNAc...) asparagine) is linked at Asn-247. The Cu cation site is built by His-307, His-389, His-391, and Met-464. 3 cysteine pairs are disulfide-bonded: Cys-364-Cys-480, Cys-368-Cys-550, and Cys-443-Cys-465. The active site involves His-389. 2 N-linked (GlcNAc...) asparagine glycosylation sites follow: Asn-476 and Asn-517. The helical transmembrane segment at 593-613 threads the bilayer; sequence LTLLFVVYVASSTIGNFGPVV.

It belongs to the copper type II ascorbate-dependent monooxygenase family. It depends on Cu(2+) as a cofactor.

The protein localises to the endoplasmic reticulum membrane. This Gallus gallus (Chicken) protein is DBH-like monooxygenase protein 1 (MOXD1).